The primary structure comprises 234 residues: Urease accessory protein UreF (234 aa).

It belongs to the UreF family. As to quaternary structure, ureD, UreF and UreG form a complex that acts as a GTP-hydrolysis-dependent molecular chaperone, activating the urease apoprotein by helping to assemble the nickel containing metallocenter of UreC. The UreE protein probably delivers the nickel.

The protein localises to the cytoplasm. Its function is as follows. Required for maturation of urease via the functional incorporation of the urease nickel metallocenter. The chain is Urease accessory protein UreF from Kocuria rhizophila (strain ATCC 9341 / DSM 348 / NBRC 103217 / DC2201).